Reading from the N-terminus, the 555-residue chain is Glucose-6-phosphate isomerase (555 aa).

Glu365 (proton donor) is an active-site residue. Catalysis depends on residues His396 and Lys522.

It belongs to the GPI family.

It is found in the cytoplasm. The enzyme catalyses alpha-D-glucose 6-phosphate = beta-D-fructose 6-phosphate. It functions in the pathway carbohydrate biosynthesis; gluconeogenesis. The protein operates within carbohydrate degradation; glycolysis; D-glyceraldehyde 3-phosphate and glycerone phosphate from D-glucose: step 2/4. Its function is as follows. Catalyzes the reversible isomerization of glucose-6-phosphate to fructose-6-phosphate. The protein is Glucose-6-phosphate isomerase of Psychrobacter cryohalolentis (strain ATCC BAA-1226 / DSM 17306 / VKM B-2378 / K5).